The sequence spans 114 residues: MSCLKIITLFLFLAAVIASSIANQKGKHRVGAPEQINPNDANLKISLAKAISSQNAGVVVVKITKATRQVVAGFKYVVEFVAKVAGTNKQKVCRTVYIEQAWLKKTSVKNFSCK.

An N-terminal signal peptide occupies residues 1–18 (MSCLKIITLFLFLAAVIA). Residues 31–109 (GAPEQINPND…QAWLKKTSVK (79 aa)) enclose the Cystatin domain. A disulfide bridge links Cys-93 with Cys-113.

Belongs to the cystatin family. Expressed by the venom gland (posterior main gland) (at protein level).

It localises to the secreted. The sequence is that of Cystatin Pr17a from Platymeris rhadamanthus (Red spot assassin bug).